Reading from the N-terminus, the 278-residue chain is Beta-lactamase-like protein str5 (278 aa).

A helical membrane pass occupies residues Val-20–Thr-37. N-linked (GlcNAc...) asparagine glycosylation is present at Asn-112.

It belongs to the beta-lactamase family.

It is found in the membrane. It participates in mycotoxin biosynthesis. In terms of biological role, beta-lactamase-like protein; part of the gene cluster that mediates the biosynthesis of strobilurin A, an antifungal polyketide that contains a key beta-methoxyacrylate toxophore that targets the complex III of the mitochondrial electron transport chain. Strobilurin biosynthesis begins with construction of benzoyl CoA by step-wise elimination of ammonia from phenylalanine by the phenylalanine ammonia-lyase str11, oxygenation by str8 and retro-Claisen reaction to form benzoic acid, which is activated to its CoA thiolester benzoyl CoA by the dedicated CoA ligase str10. Benzoyl CoA forms the starter unit for the highly reducing polyketide synthase stpks1 that produces the polyketide prestrobilutin A. The FAD-dependent oxygenase str9 then catalyzes the key oxidative rearrangement responsible for the creation of the beta-methoxyacrylate toxophore. Str9 performs epoxidation of the 2,3 olefin of prestrobilutin A, followed by Meinwald rearrangement to furnish the aldehyde intermediate. Rapid enolization of the aldehyde intermediate would give the beta-methoxyacrylate skeleton and methylations catalyzed by str2 and str3 complete the synthesis and lead to the production of strobilurin A. The short-chain dehydrogenase stl2 and the dehydrogenase str4 play a role in the shunt pathway leading to the production of bolineol. The cluster encodes no obvious halogenase gene that could be involved in production of strobilurin B, nor any obvious dimethylallyl-transferase that could be involved in the production of strobilurin G. It is possible that unknown proteins encoded in, or near, the cluster (such as str1 or stl1) may form new classes of halogenases or dimethylally-transferases, or that the responsible genes are located elsewhere on the genome. Similarly, proteins encoded by str5/str6 hydrolases appear to have no chemical role in the biosynthesis of strobilurin A. Finally, no obvious self-resistance gene is found within the cluster. The chain is Beta-lactamase-like protein str5 from Strobilurus tenacellus.